We begin with the raw amino-acid sequence, 207 residues long: Guanylate kinase (207 aa).

Residues 4–184 form the Guanylate kinase-like domain; sequence GTLYIVSAPS…ALSDLKTIIR (181 aa). 11 to 18 is a binding site for ATP; it reads APSGAGKS.

This sequence belongs to the guanylate kinase family.

Its subcellular location is the cytoplasm. The catalysed reaction is GMP + ATP = GDP + ADP. In terms of biological role, essential for recycling GMP and indirectly, cGMP. This is Guanylate kinase from Yersinia pestis bv. Antiqua (strain Antiqua).